The following is a 664-amino-acid chain: 26S rRNA (cytosine-C(5))-methyltransferase nsun-1 (664 aa).

The interval 1–105 (MAIVKKKKVS…DDSDAGDHLP (105 aa)) is disordered. Basic residues predominate over residues 38 to 52 (PKKKKLVKKVKKSAK). The segment covering 53-68 (KAHEEEPIEQVEKLQL) has biased composition (basic and acidic residues). Residues 84-99 (SDDEDLRDDYSDDDSD) show a composition bias toward acidic residues. Residues 313–319 (CSAPGGK), Asp337, and Asp382 contribute to the S-adenosyl-L-methionine site. The Nucleophile role is filled by Cys439. The interval 513–664 (KMSKQGVMEK…RRKKMLAKQQ (152 aa)) is disordered. Basic and acidic residues predominate over residues 519–528 (VMEKEKEKAA). Acidic residues predominate over residues 541–550 (EASESSDDEE). Residues 563-572 (KPAKKQQQKK) show a composition bias toward basic residues. Over residues 606 to 618 (KAAEKQAAVKEDD) the composition is skewed to basic and acidic residues. Composition is skewed to basic residues over residues 627-644 (KRAK…KRAA) and 652-664 (VKNR…AKQQ).

It belongs to the class I-like SAM-binding methyltransferase superfamily. RsmB/NOP family.

It is found in the nucleus. The protein localises to the nucleolus. The catalysed reaction is a cytidine in 26S rRNA + S-adenosyl-L-methionine = a 5-methylcytidine in 26S rRNA + S-adenosyl-L-homocysteine + H(+). In terms of biological role, methyltransferase which methylates the carbon-5 position of cytosine 2982 to 5-methylcytosine (m5C2982) in 26S rRNA. May play a role in the translation of leucine and proline codons. May be required for the translation of specific mRNAs such as mRNAs involved in gonad development, collagen production and cuticle integrity. Plays a role in ensuring the correct localization of the germline-specific protein gld-1 during development. Not required for pre-rRNA processing, the production of mature 5S, 5.8S, 18S or 26S rRNAs or global translation. Plays a role in positively regulating fertility. This Caenorhabditis elegans protein is 26S rRNA (cytosine-C(5))-methyltransferase nsun-1.